The chain runs to 256 residues: 5-keto-4-deoxy-D-glucarate aldolase (256 aa).

The active-site Proton acceptor is H50. Q151 serves as a coordination point for substrate. Mg(2+) is bound at residue E153. 2 residues coordinate substrate: S178 and D179. Mg(2+) is bound at residue D179.

Belongs to the HpcH/HpaI aldolase family. KDGluc aldolase subfamily. In terms of assembly, homohexamer; trimer of dimers. It depends on Mg(2+) as a cofactor.

It carries out the reaction 5-dehydro-4-deoxy-D-glucarate = 2-hydroxy-3-oxopropanoate + pyruvate. It catalyses the reaction 2-dehydro-3-deoxy-D-glucarate = 2-hydroxy-3-oxopropanoate + pyruvate. Its pathway is carbohydrate acid metabolism; galactarate degradation; D-glycerate from galactarate: step 2/3. In terms of biological role, catalyzes the reversible retro-aldol cleavage of both 5-keto-4-deoxy-D-glucarate and 2-keto-3-deoxy-D-glucarate to pyruvate and tartronic semialdehyde. This chain is 5-keto-4-deoxy-D-glucarate aldolase, found in Enterobacter sp. (strain 638).